A 174-amino-acid polypeptide reads, in one-letter code: MIDSDGFRANVGIIICNRYGQVMWARRFGQHSWQFPQGGVDDGESAEEAMYRELYEEVGLRPEHVHILTSTRSWLRYRLPKRLVRQDSKPVCIGQKQKWFLLQLKSQDSAINLSSSGHPEFDDWRWVSYWYPVRQVVSFKRDVYRKVMKEFAATALSFQTQEIPRKRGRQKTTG.

Residues 6-149 (GFRANVGIII…KRDVYRKVMK (144 aa)) enclose the Nudix hydrolase domain. Residues 38–59 (GGVDDGESAEEAMYRELYEEVG) carry the Nudix box motif.

Belongs to the Nudix hydrolase family. RppH subfamily. A divalent metal cation serves as cofactor.

Accelerates the degradation of transcripts by removing pyrophosphate from the 5'-end of triphosphorylated RNA, leading to a more labile monophosphorylated state that can stimulate subsequent ribonuclease cleavage. The chain is RNA pyrophosphohydrolase from Shewanella sp. (strain W3-18-1).